The sequence spans 128 residues: MAKKAVAKKKVVRVEAVGQAHIHSSFNNIIISLANSEGQVISWSSAGKMGFRSSKKNTPYAAQMAAQDCAKVAYDMGLRKVTVYVKGPGNGRESAIRTIHGAGIEVMEIIDVTPMPHNGCRPPKKRRV.

It belongs to the universal ribosomal protein uS11 family. Part of the 30S ribosomal subunit. Interacts with proteins S7 and S18. Binds to IF-3.

Functionally, located on the platform of the 30S subunit, it bridges several disparate RNA helices of the 16S rRNA. Forms part of the Shine-Dalgarno cleft in the 70S ribosome. The sequence is that of Small ribosomal subunit protein uS11 from Porphyromonas gingivalis (strain ATCC BAA-308 / W83).